A 445-amino-acid chain; its full sequence is Probable D-serine dehydratase (445 aa).

K111 is subject to N6-(pyridoxal phosphate)lysine.

It belongs to the serine/threonine dehydratase family. DsdA subfamily. It depends on pyridoxal 5'-phosphate as a cofactor.

It carries out the reaction D-serine = pyruvate + NH4(+). The polypeptide is Probable D-serine dehydratase (Burkholderia pseudomallei (strain 1710b)).